The following is a 237-amino-acid chain: Ribonuclease PH (237 aa).

Phosphate contacts are provided by residues arginine 86 and 124-126 (GTR).

Belongs to the RNase PH family. As to quaternary structure, homohexameric ring arranged as a trimer of dimers.

It carries out the reaction tRNA(n+1) + phosphate = tRNA(n) + a ribonucleoside 5'-diphosphate. Functionally, phosphorolytic 3'-5' exoribonuclease that plays an important role in tRNA 3'-end maturation. Removes nucleotide residues following the 3'-CCA terminus of tRNAs; can also add nucleotides to the ends of RNA molecules by using nucleoside diphosphates as substrates, but this may not be physiologically important. Probably plays a role in initiation of 16S rRNA degradation (leading to ribosome degradation) during starvation. The protein is Ribonuclease PH of Shewanella sp. (strain W3-18-1).